The following is a 472-amino-acid chain: UDP-N-acetylmuramoyl-L-alanyl-D-glutamate--2,6-diaminopimelate ligase (472 aa).

UDP-N-acetyl-alpha-D-muramoyl-L-alanyl-D-glutamate is bound at residue serine 21. Residue 99-105 coordinates ATP; the sequence is GTNGKTS. UDP-N-acetyl-alpha-D-muramoyl-L-alanyl-D-glutamate is bound by residues 143–144, serine 170, glutamine 176, and arginine 178; that span reads TT. The residue at position 210 (lysine 210) is an N6-carboxylysine. Meso-2,6-diaminopimelate is bound by residues arginine 367, 391–394, glycine 440, and glutamate 444; that span reads DNPR. A Meso-diaminopimelate recognition motif motif is present at residues 391–394; sequence DNPR.

This sequence belongs to the MurCDEF family. MurE subfamily. The cofactor is Mg(2+). In terms of processing, carboxylation is probably crucial for Mg(2+) binding and, consequently, for the gamma-phosphate positioning of ATP.

The protein resides in the cytoplasm. It catalyses the reaction UDP-N-acetyl-alpha-D-muramoyl-L-alanyl-D-glutamate + meso-2,6-diaminopimelate + ATP = UDP-N-acetyl-alpha-D-muramoyl-L-alanyl-gamma-D-glutamyl-meso-2,6-diaminopimelate + ADP + phosphate + H(+). It functions in the pathway cell wall biogenesis; peptidoglycan biosynthesis. In terms of biological role, catalyzes the addition of meso-diaminopimelic acid to the nucleotide precursor UDP-N-acetylmuramoyl-L-alanyl-D-glutamate (UMAG) in the biosynthesis of bacterial cell-wall peptidoglycan. This Anaplasma marginale (strain St. Maries) protein is UDP-N-acetylmuramoyl-L-alanyl-D-glutamate--2,6-diaminopimelate ligase.